The primary structure comprises 232 residues: MSAQADRVMDLSEWENRWQEGRTGFHRSDVHNLLKANVDKLICGRREVRFFFPLCGKAVDMKWLADMGHTVVGVEFSEKGIKEFSQEQNLEYNEEAVADIPGAKLFKSTDGKISIYQCDLYKFSSAVAGHFGGIWDRGALVAINPCDRQKYASLLVSLMSSDCRYLLDTLEYNPELYKGPPFFVSEDDIKTVFGGSCNIDLLQSVDGFEEKHRSWGLDSLTEKLYLLTTKTQ.

S-adenosyl-L-methionine contacts are provided by residues 14–25 (WENRWQEGRTGF), leucine 54, glutamate 75, and arginine 137. Substrate is bound at residue phenylalanine 25.

This sequence belongs to the class I-like SAM-binding methyltransferase superfamily. TPMT family.

Its subcellular location is the cytoplasm. It carries out the reaction S-adenosyl-L-methionine + a thiopurine = S-adenosyl-L-homocysteine + a thiopurine S-methylether.. The chain is Probable thiopurine S-methyltransferase (tpmt) from Danio rerio (Zebrafish).